The sequence spans 179 residues: Large ribosomal subunit protein uL5 (179 aa).

Belongs to the universal ribosomal protein uL5 family. In terms of assembly, part of the 50S ribosomal subunit; part of the 5S rRNA/L5/L18/L25 subcomplex. Contacts the 5S rRNA and the P site tRNA. Forms a bridge to the 30S subunit in the 70S ribosome.

Functionally, this is one of the proteins that bind and probably mediate the attachment of the 5S RNA into the large ribosomal subunit, where it forms part of the central protuberance. In the 70S ribosome it contacts protein S13 of the 30S subunit (bridge B1b), connecting the 2 subunits; this bridge is implicated in subunit movement. Contacts the P site tRNA; the 5S rRNA and some of its associated proteins might help stabilize positioning of ribosome-bound tRNAs. The polypeptide is Large ribosomal subunit protein uL5 (Shewanella baltica (strain OS223)).